The chain runs to 99 residues: Large ribosomal subunit protein uL23 (99 aa).

This sequence belongs to the universal ribosomal protein uL23 family. As to quaternary structure, part of the 50S ribosomal subunit. Contacts protein L29, and trigger factor when it is bound to the ribosome.

One of the early assembly proteins it binds 23S rRNA. One of the proteins that surrounds the polypeptide exit tunnel on the outside of the ribosome. Forms the main docking site for trigger factor binding to the ribosome. The chain is Large ribosomal subunit protein uL23 from Oenococcus oeni (strain ATCC BAA-331 / PSU-1).